A 25-amino-acid chain; its full sequence is AKIIGIDGLTTNSWVAVLESDKVHV.

The protein belongs to the heat shock protein 70 family.

Acts as a chaperone. The polypeptide is Chaperone protein DnaK (dnaK) (Acinetobacter calcoaceticus).